The following is a 547-amino-acid chain: ATP synthase subunit alpha (547 aa).

Residue 172–179 participates in ATP binding; the sequence is GDRKTGKT.

It belongs to the ATPase alpha/beta chains family. In terms of assembly, F-type ATPases have 2 components, CF(1) - the catalytic core - and CF(0) - the membrane proton channel. CF(1) has five subunits: alpha(3), beta(3), gamma(1), delta(1), epsilon(1). CF(0) has three main subunits: a(1), b(2) and c(9-12). The alpha and beta chains form an alternating ring which encloses part of the gamma chain. CF(1) is attached to CF(0) by a central stalk formed by the gamma and epsilon chains, while a peripheral stalk is formed by the delta and b chains.

The protein localises to the cell membrane. It catalyses the reaction ATP + H2O + 4 H(+)(in) = ADP + phosphate + 5 H(+)(out). Produces ATP from ADP in the presence of a proton gradient across the membrane. The alpha chain is a regulatory subunit. The chain is ATP synthase subunit alpha from Corynebacterium glutamicum (strain R).